A 430-amino-acid polypeptide reads, in one-letter code: Adenylosuccinate synthetase (430 aa).

Residues 12–18 (GDEGKGK) and 40–42 (GHT) each bind GTP. Catalysis depends on D13, which acts as the Proton acceptor. 2 residues coordinate Mg(2+): D13 and G40. IMP contacts are provided by residues 13–16 (DEGK), 38–41 (NAGH), T128, R142, Q223, T238, and R302. H41 functions as the Proton donor in the catalytic mechanism. 298 to 304 (TTTGRPR) lines the substrate pocket. Residues R304, 330–332 (LLD), and 412–414 (SVG) contribute to the GTP site.

Belongs to the adenylosuccinate synthetase family. Homodimer. Mg(2+) serves as cofactor.

The protein localises to the cytoplasm. It carries out the reaction IMP + L-aspartate + GTP = N(6)-(1,2-dicarboxyethyl)-AMP + GDP + phosphate + 2 H(+). The protein operates within purine metabolism; AMP biosynthesis via de novo pathway; AMP from IMP: step 1/2. Its function is as follows. Plays an important role in the de novo pathway of purine nucleotide biosynthesis. Catalyzes the first committed step in the biosynthesis of AMP from IMP. This chain is Adenylosuccinate synthetase, found in Listeria innocua serovar 6a (strain ATCC BAA-680 / CLIP 11262).